The sequence spans 156 residues: MHYQEQMESLMLGEERRRGNYTRDVDADADEGVNSPSSFPNSPDDSDRRSSSSSSRRGLSKHYKGKSQSFTTLAEALTVEDLAKPENPFNAKLKQRRESPHCRRLSGCGGASERNLSVHDVFLAGNDRPPRLSGNRPPPRAQTLSAAHISALLTRT.

Residues 1–67 are disordered; it reads MHYQEQMESL…GLSKHYKGKS (67 aa). Over residues 13 to 26 the composition is skewed to basic and acidic residues; that stretch reads GEERRRGNYTRDVD.

The protein resides in the nucleus. Functionally, promotes slightly the tolerance to oxidizing chemicals (e.g. diamide). The polypeptide is Protein OXIDATIVE STRESS 3 LIKE 3 (Arabidopsis thaliana (Mouse-ear cress)).